A 359-amino-acid chain; its full sequence is Peptide chain release factor 1 (359 aa).

N5-methylglutamine is present on Q236.

This sequence belongs to the prokaryotic/mitochondrial release factor family. Methylated by PrmC. Methylation increases the termination efficiency of RF1.

The protein localises to the cytoplasm. Peptide chain release factor 1 directs the termination of translation in response to the peptide chain termination codons UAG and UAA. This Malacoplasma penetrans (strain HF-2) (Mycoplasma penetrans) protein is Peptide chain release factor 1.